Reading from the N-terminus, the 124-residue chain is Small ribosomal subunit protein uS12 (124 aa).

Residues 1–23 form a disordered region; the sequence is MATINQLVRKPRVRQKQKSNVPA. Asp-89 is subject to 3-methylthioaspartic acid. The segment at 103 to 124 is disordered; the sequence is DTAGVGDRRQGRSKYGAKRPKG. Residues 113-124 are compositionally biased toward basic residues; that stretch reads GRSKYGAKRPKG.

The protein belongs to the universal ribosomal protein uS12 family. In terms of assembly, part of the 30S ribosomal subunit. Contacts proteins S8 and S17. May interact with IF1 in the 30S initiation complex.

With S4 and S5 plays an important role in translational accuracy. In terms of biological role, interacts with and stabilizes bases of the 16S rRNA that are involved in tRNA selection in the A site and with the mRNA backbone. Located at the interface of the 30S and 50S subunits, it traverses the body of the 30S subunit contacting proteins on the other side and probably holding the rRNA structure together. The combined cluster of proteins S8, S12 and S17 appears to hold together the shoulder and platform of the 30S subunit. This Nitrosococcus oceani (strain ATCC 19707 / BCRC 17464 / JCM 30415 / NCIMB 11848 / C-107) protein is Small ribosomal subunit protein uS12.